Here is a 149-residue protein sequence, read N- to C-terminus: Small ribosomal subunit protein bS6 (149 aa).

The segment at 94 to 149 (EKHEEGPSAMMQKRDRDDRPRRDGDRPDRGGFGDRGPRPDRGDRDDRPRRPREDRA) is disordered.

The protein belongs to the bacterial ribosomal protein bS6 family.

Its function is as follows. Binds together with bS18 to 16S ribosomal RNA. This is Small ribosomal subunit protein bS6 from Sinorhizobium fredii (strain NBRC 101917 / NGR234).